A 222-amino-acid polypeptide reads, in one-letter code: Adapter protein MecA (222 aa).

The protein belongs to the MecA family. As to quaternary structure, homodimer.

In terms of biological role, enables the recognition and targeting of unfolded and aggregated proteins to the ClpC protease or to other proteins involved in proteolysis. This Lysinibacillus sphaericus (strain C3-41) protein is Adapter protein MecA.